The sequence spans 144 residues: Dynein light chain Tctex-type protein 2B (144 aa).

This sequence belongs to the dynein light chain Tctex-type family. As to quaternary structure, light chain of the cytoplasmic dynein complex 2, a multisubunit complex composed at least of eleven different proteins. The cytoplasmic dynein 2 complex consists of two catalytic heavy chains (HCs) and a number of non-catalytic subunits presented by intermediate chains (ICs), light intermediate chains (LICs) and light chains (LCs). Among them, a heavy chain (DYNC2H1), two intermediate chains (DYNC2I2 and DYNC2I1), a light intermediate chain (DYNC2LI1), and a light chain (DYNLT2B) are unique to the dynein-2 complex, but a subset of the light chains are also shared by dynein-1 and dynein-2 complexes. The dimer DYNLT2B-DYNLT1/DYNLT3 interacts with DYNC2I1; this interaction is crucial for retrograde trafficking of ciliary proteins.

The protein localises to the dynein axonemal particle. Acts as one of several non-catalytic accessory components of the cytoplasmic dynein 2 complex (dynein-2 complex), a motor protein complex that drives the movement of cargos along microtubules within cilia and flagella in concert with the intraflagellar transport (IFT) system. Required for proper retrograde ciliary transport. This is Dynein light chain Tctex-type protein 2B (Dynlt2b) from Mus musculus (Mouse).